A 349-amino-acid polypeptide reads, in one-letter code: Protein BCCIP homolog (349 aa).

Basic residues predominate over residues 1-10 (MGRVFKKKGG). Positions 1-65 (MGRVFKKKGG…DDEEEDEDEQ (65 aa)) are disordered. Over residues 11–33 (AKREAEEEKQEELVMRKKLRKEE) the composition is skewed to basic and acidic residues. Residues 34–65 (EPEPVEDVEEDEDVSDEDDEDIDDEEEDEDEQ) show a composition bias toward acidic residues.

This sequence belongs to the BCP1 family.

The chain is Protein BCCIP homolog from Caenorhabditis elegans.